The chain runs to 240 residues: Putative tyrosine phosphatase 067L (240 aa).

The Tyrosine-protein phosphatase domain occupies 3 to 151 (QASFFVADKA…EREWPLNPTQ (149 aa)). Catalysis depends on Cys-96, which acts as the Phosphocysteine intermediate.

It belongs to the protein-tyrosine phosphatase family.

It catalyses the reaction O-phospho-L-tyrosyl-[protein] + H2O = L-tyrosyl-[protein] + phosphate. In Aedes vexans (Inland floodwater mosquito), this protein is Putative tyrosine phosphatase 067L.